The sequence spans 169 residues: Putative phosphoesterase SH1944 (169 aa).

Residue His-34 is the Proton donor of the active site. 2 short sequence motifs (HXTX) span residues 34–37 and 115–118; these read HITI and HFTI. His-115 functions as the Proton acceptor in the catalytic mechanism.

This sequence belongs to the 2H phosphoesterase superfamily. YjcG family.

This Staphylococcus haemolyticus (strain JCSC1435) protein is Putative phosphoesterase SH1944.